The chain runs to 204 residues: Kunitz type trypsin inhibitor 106 (204 aa).

Positions Met-1 to Ala-26 are cleaved as a signal peptide. Asn-62 carries N-linked (GlcNAc...) asparagine glycosylation. A disulfide bridge connects residues Cys-65 and Cys-112. N-linked (GlcNAc...) asparagine glycosylation is present at Asn-141. Intrachain disulfides connect Cys-164–Cys-176 and Cys-169–Cys-172.

It belongs to the protease inhibitor I3 (leguminous Kunitz-type inhibitor) family. Interacts with SCP1 and CP. Expressed at low levels in non-mycorrhizal roots.

The protein resides in the secreted. Its subcellular location is the extracellular space. It is found in the apoplast. Protease inhibitor that, together with SCP1, controls mycorrhiza establishment and arbuscule development during root colonization by arbuscular mycorrhizal (AM) fungi (e.g. Rhizophagus irregularis), probably by degrading SCP1 in the apoplast of the periarbuscular region. The chain is Kunitz type trypsin inhibitor 106 from Medicago truncatula (Barrel medic).